A 370-amino-acid polypeptide reads, in one-letter code: Histidinol-phosphate aminotransferase 3 (370 aa).

Lys-233 carries the post-translational modification N6-(pyridoxal phosphate)lysine.

This sequence belongs to the class-II pyridoxal-phosphate-dependent aminotransferase family. Histidinol-phosphate aminotransferase subfamily. Homodimer. Pyridoxal 5'-phosphate serves as cofactor.

It carries out the reaction L-histidinol phosphate + 2-oxoglutarate = 3-(imidazol-4-yl)-2-oxopropyl phosphate + L-glutamate. It participates in amino-acid biosynthesis; L-histidine biosynthesis; L-histidine from 5-phospho-alpha-D-ribose 1-diphosphate: step 7/9. In Burkholderia lata (strain ATCC 17760 / DSM 23089 / LMG 22485 / NCIMB 9086 / R18194 / 383), this protein is Histidinol-phosphate aminotransferase 3.